The sequence spans 132 residues: Agouti-signaling protein (132 aa).

Positions 1–22 (MDVTRLLLATLLVFLCFFTACS) are cleaved as a signal peptide. Asn-39 is a glycosylation site (N-linked (GlcNAc...) asparagine). The disordered stretch occupies residues 61–87 (QISRKEAEKKRSSKKEASMKKVARPRT). Basic and acidic residues predominate over residues 63 to 79 (SRKEAEKKRSSKKEASM). Cystine bridges form between Cys-93–Cys-108, Cys-100–Cys-114, Cys-107–Cys-125, Cys-111–Cys-132, and Cys-116–Cys-123. The Agouti domain occupies 93 to 132 (CVATRDSCKPPAPACCDPCASCQCRFFRSACSCRVLSLNC).

The protein localises to the secreted. Involved in the regulation of melanogenesis. The binding of ASP to MC1R precludes alpha-MSH initiated signaling and thus blocks production of cAMP, leading to a down-regulation of eumelanogenesis (brown/black pigment) and thus increasing synthesis of pheomelanin (yellow/red pigment). The sequence is that of Agouti-signaling protein (ASIP) from Macaca nigrescens (Gorontalo macaque).